An 86-amino-acid chain; its full sequence is MKASMFLALAGLALLFVVCYASESEEKEFSNELLSSVLAVDDNSKGEERECLGFGKGCNPSSDQCCKSSNLVCSRKHRWCKYEIGK.

The first 21 residues, 1–21 (MKASMFLALAGLALLFVVCYA), serve as a signal peptide directing secretion. Positions 22-49 (SESEEKEFSNELLSSVLAVDDNSKGEER) are excised as a propeptide. 3 disulfide bridges follow: Cys51–Cys66, Cys58–Cys73, and Cys65–Cys80. An Isoleucine amide modification is found at Ile84.

This sequence belongs to the neurotoxin 10 (Hwtx-1) family. 22 (Htx-4) subfamily. Monomer. In terms of tissue distribution, expressed by the venom gland.

It localises to the secreted. Its function is as follows. Neurotoxin. Selectively blocks neuronal tetrodotoxin-sensitive voltage-gated sodium channels (Nav). Does not affect tetrodotoxin-resistant voltage-gated sodium channels or calcium channels. The protein is Mu-theraphotoxin-Hhn1d of Cyriopagopus hainanus (Chinese bird spider).